Reading from the N-terminus, the 522-residue chain is Bifunctional purine biosynthesis protein PurH (522 aa).

The MGS-like domain occupies 1–145 (MKPIARALIS…KNHAAVTVIV (145 aa)).

It belongs to the PurH family.

It carries out the reaction (6R)-10-formyltetrahydrofolate + 5-amino-1-(5-phospho-beta-D-ribosyl)imidazole-4-carboxamide = 5-formamido-1-(5-phospho-D-ribosyl)imidazole-4-carboxamide + (6S)-5,6,7,8-tetrahydrofolate. The catalysed reaction is IMP + H2O = 5-formamido-1-(5-phospho-D-ribosyl)imidazole-4-carboxamide. The protein operates within purine metabolism; IMP biosynthesis via de novo pathway; 5-formamido-1-(5-phospho-D-ribosyl)imidazole-4-carboxamide from 5-amino-1-(5-phospho-D-ribosyl)imidazole-4-carboxamide (10-formyl THF route): step 1/1. Its pathway is purine metabolism; IMP biosynthesis via de novo pathway; IMP from 5-formamido-1-(5-phospho-D-ribosyl)imidazole-4-carboxamide: step 1/1. The protein is Bifunctional purine biosynthesis protein PurH of Nitrosococcus oceani (strain ATCC 19707 / BCRC 17464 / JCM 30415 / NCIMB 11848 / C-107).